A 43-amino-acid polypeptide reads, in one-letter code: Potassium channel toxin gamma-KTx 4.13 (43 aa).

4 cysteine pairs are disulfide-bonded: Cys-5–Cys-23, Cys-11–Cys-34, Cys-20–Cys-39, and Cys-24–Cys-41.

This sequence belongs to the ergtoxin family. Gamma-KTx 4 subfamily. As to expression, expressed by the venom gland.

Its subcellular location is the secreted. Its function is as follows. Reversibly blocks Kv11/ERG potassium channels. The polypeptide is Potassium channel toxin gamma-KTx 4.13 (Centruroides noxius (Mexican scorpion)).